A 299-amino-acid chain; its full sequence is NEDD8-activating enzyme E1 catalytic subunit (299 aa).

An ATP-binding site is contributed by 12-37; sequence GLGCEILKNLTMLSFVKQVHIVDIDT. Cys-168 (glycyl thioester intermediate) is an active-site residue.

The protein belongs to the ubiquitin-activating E1 family. UBA3 subfamily. Heterodimer of UBA3 and ULA1. Interacts with NEDD8 and UBC12.

It catalyses the reaction ATP + [NEDD8 protein] + [E1 NEDD8-activating enzyme]-L-cysteine = AMP + diphosphate + [E1 NEDD8-activating enzyme]-S-[NEDD8 protein]-yl-L-cysteine.. It functions in the pathway protein modification; protein neddylation. Catalytic subunit of the dimeric UBA3-ULA1 E1 enzyme. E1 activates NEDD8/RUB1 by first adenylating its C-terminal glycine residue with ATP, thereafter linking this residue to the side chain of the catalytic cysteine, yielding a NEDD8-UBA3 thioester and free AMP. E1 finally transfers NEDD8 to the catalytic cysteine of UBC12. The protein is NEDD8-activating enzyme E1 catalytic subunit (UBA3) of Saccharomyces cerevisiae (strain ATCC 204508 / S288c) (Baker's yeast).